A 396-amino-acid polypeptide reads, in one-letter code: Elongation factor Tu (396 aa).

The 196-residue stretch at 10–205 (KPHVNIGTIG…AVDESIPDPV (196 aa)) folds into the tr-type G domain. A G1 region spans residues 19 to 26 (GHVDHGKT). 19-26 (GHVDHGKT) lines the GTP pocket. Thr-26 contacts Mg(2+). The G2 stretch occupies residues 62 to 66 (GITIN). Positions 83 to 86 (DAPG) are G3. GTP-binding positions include 83-87 (DAPGH) and 138-141 (NKAD). Residues 138–141 (NKAD) are G4. The segment at 175–177 (SAL) is G5.

Belongs to the TRAFAC class translation factor GTPase superfamily. Classic translation factor GTPase family. EF-Tu/EF-1A subfamily. As to quaternary structure, monomer.

The protein resides in the cytoplasm. It carries out the reaction GTP + H2O = GDP + phosphate + H(+). GTP hydrolase that promotes the GTP-dependent binding of aminoacyl-tRNA to the A-site of ribosomes during protein biosynthesis. The polypeptide is Elongation factor Tu (Mycobacterium sp. (strain JLS)).